The sequence spans 158 residues: N-acetylgalactosamine-specific phosphotransferase enzyme IIB component 1 (158 aa).

Positions 1–158 (MTSPNILLTR…PGDQKEQIPD (158 aa)) constitute a PTS EIIB type-4 domain. The Pros-phosphohistidine intermediate role is filled by H17.

Its subcellular location is the cytoplasm. Functionally, the phosphoenolpyruvate-dependent sugar phosphotransferase system (sugar PTS), a major carbohydrate active -transport system, catalyzes the phosphorylation of incoming sugar substrates concomitantly with their translocation across the cell membrane. This system is involved in N-acetylgalactosamine transport. The protein is N-acetylgalactosamine-specific phosphotransferase enzyme IIB component 1 (agaB) of Escherichia coli (strain K12).